The chain runs to 56 residues: Large ribosomal subunit protein bL32c (56 aa).

The protein belongs to the bacterial ribosomal protein bL32 family.

It is found in the plastid. Its subcellular location is the chloroplast. The polypeptide is Large ribosomal subunit protein bL32c (Tupiella akineta (Green alga)).